The following is a 400-amino-acid chain: Enoyl-[acyl-carrier-protein] reductase [NADH] (400 aa).

NAD(+) is bound by residues 48–53, 74–75, 111–112, and 139–140; these read GASTGY, FE, DA, and LA. Position 225 (Tyr225) interacts with substrate. The active-site Proton donor is the Tyr235. NAD(+)-binding positions include Lys244 and 273 to 275; that span reads VVT.

This sequence belongs to the TER reductase family. Monomer.

It carries out the reaction a 2,3-saturated acyl-[ACP] + NAD(+) = a (2E)-enoyl-[ACP] + NADH + H(+). It participates in lipid metabolism; fatty acid biosynthesis. Functionally, involved in the final reduction of the elongation cycle of fatty acid synthesis (FAS II). Catalyzes the reduction of a carbon-carbon double bond in an enoyl moiety that is covalently linked to an acyl carrier protein (ACP). This chain is Enoyl-[acyl-carrier-protein] reductase [NADH], found in Burkholderia multivorans (strain ATCC 17616 / 249).